We begin with the raw amino-acid sequence, 208 residues long: Hemocyanin, units E and F (208 aa).

Cu cation is bound at residue His1. The segment at 1–74 (HGLPAQCPNA…HDLESVRGNL (74 aa)) is unit E. Cys7 and Cys18 are oxidised to a cystine. The 2'-(S-cysteinyl)-histidine (Cys-His) cross-link spans 19–21 (CLH). The N-linked (GlcNAc...) asparagine glycan is linked to Asn43. The unit F stretch occupies residues 75 to 208 (VRKNVDRLSL…GHLSLLSPET (134 aa)). His113 contributes to the Cu cation binding site. Cys119 and Cys130 are disulfide-bonded. Positions 131-133 (CLH) form a cross-link, 2'-(S-cysteinyl)-histidine (Cys-His). 2 residues coordinate Cu cation: His133 and His142.

This sequence belongs to the tyrosinase family. Hemocyanin subfamily. In terms of assembly, decamers of large identical subunits (390 kDa), each containing 8 globular oxygen-binding functional units. Cu(2+) serves as cofactor.

Hemocyanins are copper-containing oxygen carriers occurring freely dissolved in the hemolymph of many mollusks and arthropods. This Sepia officinalis (Common cuttlefish) protein is Hemocyanin, units E and F.